The sequence spans 123 residues: Small ribosomal subunit protein uS13 (123 aa).

A disordered region spans residues 96–123 (GLPVRGQRTKTNARTRKGPKKTVAGKKK).

The protein belongs to the universal ribosomal protein uS13 family. Part of the 30S ribosomal subunit. Forms a loose heterodimer with protein S19. Forms two bridges to the 50S subunit in the 70S ribosome.

In terms of biological role, located at the top of the head of the 30S subunit, it contacts several helices of the 16S rRNA. In the 70S ribosome it contacts the 23S rRNA (bridge B1a) and protein L5 of the 50S subunit (bridge B1b), connecting the 2 subunits; these bridges are implicated in subunit movement. Contacts the tRNAs in the A and P-sites. The polypeptide is Small ribosomal subunit protein uS13 (Nocardia farcinica (strain IFM 10152)).